We begin with the raw amino-acid sequence, 88 residues long: Small ribosomal subunit protein bS20 (88 aa).

Belongs to the bacterial ribosomal protein bS20 family.

Its function is as follows. Binds directly to 16S ribosomal RNA. The sequence is that of Small ribosomal subunit protein bS20 from Rhodospirillum rubrum (strain ATCC 11170 / ATH 1.1.1 / DSM 467 / LMG 4362 / NCIMB 8255 / S1).